Here is a 409-residue protein sequence, read N- to C-terminus: All trans-polyprenyl-diphosphate synthase PDSS1 (409 aa).

Positions 128, 131, and 167 each coordinate isopentenyl diphosphate. Mg(2+) contacts are provided by aspartate 174 and aspartate 178. Arginine 184 lines the isopentenyl diphosphate pocket.

It belongs to the FPP/GGPP synthase family. In terms of assembly, heterotetramer composed of 2 PDSS1/DPS1 and 2 PDSS2/DLP1 subunits. Mg(2+) is required as a cofactor.

Its subcellular location is the mitochondrion. It carries out the reaction 7 isopentenyl diphosphate + (2E,6E)-farnesyl diphosphate = all-trans-decaprenyl diphosphate + 7 diphosphate. It catalyses the reaction 6 isopentenyl diphosphate + (2E,6E)-farnesyl diphosphate = all-trans-nonaprenyl diphosphate + 6 diphosphate. It participates in cofactor biosynthesis; ubiquinone biosynthesis. In terms of biological role, heterotetrameric enzyme that catalyzes the condensation of farnesyl diphosphate (FPP), which acts as a primer, and isopentenyl diphosphate (IPP) to produce prenyl diphosphates of varying chain lengths and participates in the determination of the side chain of ubiquinone. Supplies nona and decaprenyl diphosphate, the precursors for the side chain of the isoprenoid quinones ubiquinone-9 (Q9)and ubiquinone-10 (Q10) respectively. The enzyme adds isopentenyl diphosphate molecules sequentially to farnesyl diphosphate with trans stereochemistry. This chain is All trans-polyprenyl-diphosphate synthase PDSS1, found in Mus musculus (Mouse).